A 129-amino-acid chain; its full sequence is Glycine cleavage system H protein (129 aa).

In terms of domain architecture, Lipoyl-binding spans 24 to 106 (IAVIGISAYA…YEQGWLLKVQ (83 aa)). Residue Lys-65 is modified to N6-lipoyllysine.

The protein belongs to the GcvH family. In terms of assembly, the glycine cleavage system is composed of four proteins: P, T, L and H. Requires (R)-lipoate as cofactor.

The glycine cleavage system catalyzes the degradation of glycine. The H protein shuttles the methylamine group of glycine from the P protein to the T protein. The protein is Glycine cleavage system H protein of Synechococcus elongatus (strain ATCC 33912 / PCC 7942 / FACHB-805) (Anacystis nidulans R2).